Here is a 276-residue protein sequence, read N- to C-terminus: Acyl-[acyl-carrier-protein]--UDP-N-acetylglucosamine O-acyltransferase (276 aa).

It belongs to the transferase hexapeptide repeat family. LpxA subfamily. Homotrimer.

It localises to the cytoplasm. The enzyme catalyses a (3R)-hydroxyacyl-[ACP] + UDP-N-acetyl-alpha-D-glucosamine = a UDP-3-O-[(3R)-3-hydroxyacyl]-N-acetyl-alpha-D-glucosamine + holo-[ACP]. Its pathway is glycolipid biosynthesis; lipid IV(A) biosynthesis; lipid IV(A) from (3R)-3-hydroxytetradecanoyl-[acyl-carrier-protein] and UDP-N-acetyl-alpha-D-glucosamine: step 1/6. Involved in the biosynthesis of lipid A, a phosphorylated glycolipid that anchors the lipopolysaccharide to the outer membrane of the cell. This chain is Acyl-[acyl-carrier-protein]--UDP-N-acetylglucosamine O-acyltransferase, found in Gloeothece citriformis (strain PCC 7424) (Cyanothece sp. (strain PCC 7424)).